We begin with the raw amino-acid sequence, 885 residues long: Conidiophore development regulator abaA (885 aa).

Polar residues predominate over residues 1-20 (MSSLFQPRPVLSSQRYSQSP). The tract at residues 1-25 (MSSLFQPRPVLSSQRYSQSPDYVDT) is disordered. A DNA-binding region (TEA) is located at residues 124 to 217 (QKDKGGVWRR…QVVKKFFEDL (94 aa)). Disordered regions lie at residues 502–539 (KEKR…WTRR) and 817–885 (APGS…TAGW). Basic and acidic residues-rich tracts occupy residues 508 to 521 (YADG…ERAG) and 831 to 840 (VESHAGDHHG).

The protein belongs to the TEC1 family.

It localises to the nucleus. BrlA, abaA and wetA are pivotal regulators of conidiophore development and conidium maturation. They act individually and together to regulate their own expression and that of numerous other sporulation-specific genes. BrlA, abaA and wetA act together to positively regulate the expression of the Pks1 gene cluster that mediates the biosynthesis of an anthraquinone derivative pigment that contributes to conidial pigmentation that provides protection from UV radiation, heat and cold stress. This is Conidiophore development regulator abaA from Metarhizium robertsii (strain ARSEF 23 / ATCC MYA-3075) (Metarhizium anisopliae (strain ARSEF 23)).